We begin with the raw amino-acid sequence, 338 residues long: Ketol-acid reductoisomerase (NADP(+)) (338 aa).

Residues 1 to 181 (MKVYYDKDAD…GGTKGGVIET (181 aa)) enclose the KARI N-terminal Rossmann domain. Residues 24–27 (YGSQ), arginine 47, and serine 52 contribute to the NADP(+) site. Residue histidine 107 is part of the active site. Residue glycine 133 coordinates NADP(+). The KARI C-terminal knotted domain maps to 182–327 (NFREETETDL…GQLRDMMPWI (146 aa)). Mg(2+)-binding residues include aspartate 190, glutamate 194, glutamate 226, and glutamate 230. Serine 251 serves as a coordination point for substrate.

It belongs to the ketol-acid reductoisomerase family. The cofactor is Mg(2+).

The catalysed reaction is (2R)-2,3-dihydroxy-3-methylbutanoate + NADP(+) = (2S)-2-acetolactate + NADPH + H(+). It carries out the reaction (2R,3R)-2,3-dihydroxy-3-methylpentanoate + NADP(+) = (S)-2-ethyl-2-hydroxy-3-oxobutanoate + NADPH + H(+). Its pathway is amino-acid biosynthesis; L-isoleucine biosynthesis; L-isoleucine from 2-oxobutanoate: step 2/4. It participates in amino-acid biosynthesis; L-valine biosynthesis; L-valine from pyruvate: step 2/4. In terms of biological role, involved in the biosynthesis of branched-chain amino acids (BCAA). Catalyzes an alkyl-migration followed by a ketol-acid reduction of (S)-2-acetolactate (S2AL) to yield (R)-2,3-dihydroxy-isovalerate. In the isomerase reaction, S2AL is rearranged via a Mg-dependent methyl migration to produce 3-hydroxy-3-methyl-2-ketobutyrate (HMKB). In the reductase reaction, this 2-ketoacid undergoes a metal-dependent reduction by NADPH to yield (R)-2,3-dihydroxy-isovalerate. This chain is Ketol-acid reductoisomerase (NADP(+)), found in Aromatoleum aromaticum (strain DSM 19018 / LMG 30748 / EbN1) (Azoarcus sp. (strain EbN1)).